Here is a 473-residue protein sequence, read N- to C-terminus: Serine/threonine-protein phosphatase 2A activator 1 (473 aa).

The disordered stretch occupies residues 360–473 (NAVPPPTSAH…HVPTKAPWAK (114 aa)). The segment covering 368–378 (AHMSTTQSQSR) has biased composition (polar residues). Residues 395 to 416 (APWATATQAAPPAGAGTAAPWA) are compositionally biased toward low complexity.

Belongs to the PTPA-type PPIase family.

The protein resides in the cytoplasm. The protein localises to the nucleus. It catalyses the reaction [protein]-peptidylproline (omega=180) = [protein]-peptidylproline (omega=0). In terms of biological role, PPIases accelerate the folding of proteins. It catalyzes the cis-trans isomerization of proline imidic peptide bonds in oligopeptides. Acts as a regulatory subunit for PP2A-like phosphatases modulating their activity or substrate specificity, probably by inducing a conformational change in the catalytic subunit, a direct target of the PPIase. Can reactivate inactive phosphatase PP2A-phosphatase methylesterase complexes (PP2Ai) in presence of ATP and Mg(2+) by dissociating the inactive form from the complex. In Aspergillus fumigatus (strain ATCC MYA-4609 / CBS 101355 / FGSC A1100 / Af293) (Neosartorya fumigata), this protein is Serine/threonine-protein phosphatase 2A activator 1 (rrd1).